The sequence spans 614 residues: V-type proton ATPase catalytic subunit A (614 aa).

Glycine 247–threonine 254 provides a ligand contact to ATP.

It belongs to the ATPase alpha/beta chains family. As to quaternary structure, V-ATPase is a heteromultimeric enzyme made up of two complexes: the ATP-hydrolytic V1 complex and the proton translocation V0 complex. The V1 complex consists of three catalytic AB heterodimers that form a heterohexamer, three peripheral stalks each consisting of EG heterodimers, one central rotor including subunits D and F, and the regulatory subunits C and H. The proton translocation complex V0 consists of the proton transport subunit a, a ring of proteolipid subunits c9c'', rotary subunit d, subunits e and f, and the accessory subunits VhaAC45 and ATP6AP2.

It catalyses the reaction ATP + H2O + 4 H(+)(in) = ADP + phosphate + 5 H(+)(out). With respect to regulation, ATP hydrolysis occurs at the interface between the nucleotide-binding domains of subunits A and B. ATP hydrolysis triggers a conformational change in the subunits D and F, which induces a shift of subunit d. The c-ring is subsequently rotated and results in a continuous proton translocation across the membrane. Catalytic subunit of the V1 complex of vacuolar(H+)-ATPase (V-ATPase), a multisubunit enzyme composed of a peripheral complex (V1) that hydrolyzes ATP and a membrane integral complex (V0) that translocates protons. V-ATPase is responsible for acidifying and maintaining the pH of intracellular compartments and in some cell types, is targeted to the plasma membrane, where it is responsible for acidifying the extracellular environment. The polypeptide is V-type proton ATPase catalytic subunit A (VhaA) (Aedes aegypti (Yellowfever mosquito)).